Here is an 847-residue protein sequence, read N- to C-terminus: Putative membrane protein SCO5905 (847 aa).

The next 12 helical transmembrane spans lie at 18-38 (AVVV…APAL), 187-207 (GGDK…LLAI), 215-235 (LVPL…GAIL), 248-268 (ASIM…IITA), 302-322 (IVLA…GFGP), 326-346 (LGVA…VLLL), 381-401 (VKVA…LLGY), 539-559 (DTTL…VLLL), 562-582 (LLAP…TLGA), 600-620 (VTAY…IFIM), 643-663 (TGGV…VLMT), and 672-692 (FGFA…PLLV). A disordered region spans residues 708-729 (RPGTPQTPSTPTSEPPSADAPA). 3 helical membrane-spanning segments follow: residues 744–764 (FTWI…GMYL), 778–798 (FGTL…LVAI), and 808–828 (TIFA…EIWA).

The protein belongs to the resistance-nodulation-cell division (RND) (TC 2.A.6) family. MmpL subfamily.

It localises to the cell membrane. This Streptomyces coelicolor (strain ATCC BAA-471 / A3(2) / M145) protein is Putative membrane protein SCO5905.